The following is a 59-amino-acid chain: Large ribosomal subunit protein bL32 (59 aa).

The segment at 1–59 is disordered; it reads MAVQQNKKSPSKRGMHRSHDHLSVAPLAVEPTTGETHLRHHVSPNGYYRGRKVIKTKND. Basic residues-rich tracts occupy residues 9–19 and 49–59; these read SPSKRGMHRSH and RGRKVIKTKND.

This sequence belongs to the bacterial ribosomal protein bL32 family.

The polypeptide is Large ribosomal subunit protein bL32 (Cupriavidus metallidurans (strain ATCC 43123 / DSM 2839 / NBRC 102507 / CH34) (Ralstonia metallidurans)).